The primary structure comprises 164 residues: MTCQTYNLFVLSVIMIYYGHTASSLNLVQLQDDIDKLKADFNSSHSDVADGGPIIVEKLKNWTERNEKRIILSQIVSMYLEMLENTDKSKPHIKHISEELYTLKNNLPDGVKKVKDIMDLAKLRMNDLRIQRKAANELFSVLQKLVDPPSSKRKRSQSQRKCNC.

An N-terminal signal peptide occupies residues 1-19 (MTCQTYNLFVLSVIMIYYG). N-linked (GlcNAc...) asparagine glycosylation is found at Asn-42 and Asn-61.

Belongs to the type II (or gamma) interferon family. As to quaternary structure, homodimer.

It localises to the secreted. In terms of biological role, produced by lymphocytes activated by specific antigens or mitogens. IFN-gamma, in addition to having antiviral activity, has important immunoregulatory functions. It is a potent activator of macrophages, it has antiproliferative effects on transformed cells and it can potentiate the antiviral and antitumor effects of the type I interferons. The chain is Interferon gamma (IFNG) from Phasianus colchicus colchicus (Black-necked pheasant).